The primary structure comprises 371 residues: Putative glutamate--cysteine ligase 2 (371 aa).

Belongs to the glutamate--cysteine ligase type 2 family. YbdK subfamily.

The catalysed reaction is L-cysteine + L-glutamate + ATP = gamma-L-glutamyl-L-cysteine + ADP + phosphate + H(+). In terms of biological role, ATP-dependent carboxylate-amine ligase which exhibits weak glutamate--cysteine ligase activity. In Burkholderia ambifaria (strain MC40-6), this protein is Putative glutamate--cysteine ligase 2.